A 42-amino-acid chain; its full sequence is uncharacterized protein (42 aa).

The chain crosses the membrane as a helical span at residues 10–30 (VANWVTVILMALAGYAVLALA).

It localises to the host membrane. This is an uncharacterized protein from Acinetobacter calcoaceticus (Arthrobacter siderocapsulatus).